The chain runs to 268 residues: 14-3-3-like protein GF14 iota (268 aa).

Phosphoserine occurs at positions 70 and 193. Thr214 is subject to Phosphothreonine. The segment at 240–268 (DLPEDGGEDNIKTEESKQEQAKPADATEN) is disordered. A compositionally biased stretch (basic and acidic residues) spans 248 to 261 (DNIKTEESKQEQAK).

It belongs to the 14-3-3 family. In terms of tissue distribution, expressed in flowers.

The protein localises to the nucleus. It is found in the cytoplasm. Is associated with a DNA binding complex that binds to the G box, a well-characterized cis-acting DNA regulatory element found in plant genes. The protein is 14-3-3-like protein GF14 iota of Arabidopsis thaliana (Mouse-ear cress).